The following is a 153-amino-acid chain: NADPH-dependent 7-cyano-7-deazaguanine reductase (153 aa).

The tract at residues 1 to 30 (MDSIETHAKQLGQQTPLPASPEAAQLDRVP) is disordered. Residue C51 is the Thioimide intermediate of the active site. The Proton donor role is filled by D58. Substrate is bound by residues 73–75 (VES) and 92–93 (HE).

It belongs to the GTP cyclohydrolase I family. QueF type 1 subfamily.

Its subcellular location is the cytoplasm. The enzyme catalyses 7-aminomethyl-7-carbaguanine + 2 NADP(+) = 7-cyano-7-deazaguanine + 2 NADPH + 3 H(+). It functions in the pathway tRNA modification; tRNA-queuosine biosynthesis. In terms of biological role, catalyzes the NADPH-dependent reduction of 7-cyano-7-deazaguanine (preQ0) to 7-aminomethyl-7-deazaguanine (preQ1). The sequence is that of NADPH-dependent 7-cyano-7-deazaguanine reductase from Methylorubrum extorquens (strain CM4 / NCIMB 13688) (Methylobacterium extorquens).